The primary structure comprises 726 residues: Catalase-peroxidase (726 aa).

The tryptophyl-tyrosyl-methioninium (Trp-Tyr) (with M-242) cross-link spans 93 to 216; sequence WHSAGTYRVH…LAAVQMGLIY (124 aa). The active-site Proton acceptor is the His94. The tryptophyl-tyrosyl-methioninium (Tyr-Met) (with W-93) cross-link spans 216–242; that stretch reads YVNPEGPNGNPDPVAAAVDIRETFTRM. His257 contributes to the heme b binding site. The tract at residues 471–490 is disordered; it reads GSDKRGGANGARIRLSPQKD.

The protein belongs to the peroxidase family. Peroxidase/catalase subfamily. Homodimer or homotetramer. The cofactor is heme b. Post-translationally, formation of the three residue Trp-Tyr-Met cross-link is important for the catalase, but not the peroxidase activity of the enzyme.

It catalyses the reaction H2O2 + AH2 = A + 2 H2O. The enzyme catalyses 2 H2O2 = O2 + 2 H2O. In terms of biological role, bifunctional enzyme with both catalase and broad-spectrum peroxidase activity. The chain is Catalase-peroxidase from Methylacidiphilum infernorum (isolate V4) (Methylokorus infernorum (strain V4)).